Here is a 196-residue protein sequence, read N- to C-terminus: ATP-dependent Clp protease proteolytic subunit (196 aa).

Catalysis depends on S99, which acts as the Nucleophile. Residue H124 is part of the active site.

The protein belongs to the peptidase S14 family. As to quaternary structure, fourteen ClpP subunits assemble into 2 heptameric rings which stack back to back to give a disk-like structure with a central cavity, resembling the structure of eukaryotic proteasomes.

It is found in the cytoplasm. It carries out the reaction Hydrolysis of proteins to small peptides in the presence of ATP and magnesium. alpha-casein is the usual test substrate. In the absence of ATP, only oligopeptides shorter than five residues are hydrolyzed (such as succinyl-Leu-Tyr-|-NHMec, and Leu-Tyr-Leu-|-Tyr-Trp, in which cleavage of the -Tyr-|-Leu- and -Tyr-|-Trp bonds also occurs).. Cleaves peptides in various proteins in a process that requires ATP hydrolysis. Has a chymotrypsin-like activity. Plays a major role in the degradation of misfolded proteins. The chain is ATP-dependent Clp protease proteolytic subunit from Nitratiruptor sp. (strain SB155-2).